The following is a 278-amino-acid chain: Protoheme IX farnesyltransferase (278 aa).

9 helical membrane passes run 12-32 (VIWLLILSSVVGYVYAAGTVD), 36-56 (LAALTAAATLAVGGSAAFNHY), 72-92 (PLPAGAIPPSNALVYSLALSA), 105-124 (LPGVFVALGWFFYAVVYTVW), 130-150 (WLNILGGGFAGNATFLGGYAL), 157-177 (LPAVLISFAIYLWIPSHIWAL), 204-224 (AIISALNIASAAYILWLYLVF), 228-248 (LPGLALVLAGVAGTVATSALA), and 257-277 (MWRMYKASSPILTLFLLALVF).

This sequence belongs to the UbiA prenyltransferase family. Protoheme IX farnesyltransferase subfamily.

The protein localises to the cell membrane. It catalyses the reaction heme b + (2E,6E)-farnesyl diphosphate + H2O = Fe(II)-heme o + diphosphate. It participates in porphyrin-containing compound metabolism; heme O biosynthesis; heme O from protoheme: step 1/1. Converts heme B (protoheme IX) to heme O by substitution of the vinyl group on carbon 2 of heme B porphyrin ring with a hydroxyethyl farnesyl side group. This chain is Protoheme IX farnesyltransferase, found in Pyrobaculum neutrophilum (strain DSM 2338 / JCM 9278 / NBRC 100436 / V24Sta) (Thermoproteus neutrophilus).